The sequence spans 123 residues: Large ribosomal subunit protein bL12 (123 aa).

Belongs to the bacterial ribosomal protein bL12 family. Homodimer. Part of the ribosomal stalk of the 50S ribosomal subunit. Forms a multimeric L10(L12)X complex, where L10 forms an elongated spine to which 2 to 4 L12 dimers bind in a sequential fashion. Binds GTP-bound translation factors.

Forms part of the ribosomal stalk which helps the ribosome interact with GTP-bound translation factors. Is thus essential for accurate translation. This is Large ribosomal subunit protein bL12 from Shewanella amazonensis (strain ATCC BAA-1098 / SB2B).